Here is a 360-residue protein sequence, read N- to C-terminus: Aminomethyltransferase (360 aa).

The protein belongs to the GcvT family. As to quaternary structure, the glycine cleavage system is composed of four proteins: P, T, L and H.

The catalysed reaction is N(6)-[(R)-S(8)-aminomethyldihydrolipoyl]-L-lysyl-[protein] + (6S)-5,6,7,8-tetrahydrofolate = N(6)-[(R)-dihydrolipoyl]-L-lysyl-[protein] + (6R)-5,10-methylene-5,6,7,8-tetrahydrofolate + NH4(+). In terms of biological role, the glycine cleavage system catalyzes the degradation of glycine. The chain is Aminomethyltransferase from Legionella pneumophila (strain Paris).